We begin with the raw amino-acid sequence, 179 residues long: MRFHHFWPPNDIYFGVGAAGIIEEVSLITNDRNYLFVNLNRYSLLNALNFFTRMSDINKIIVIISSSRLMPLARFWLTECKNVIAVFDAATSVQDIIRNVSQHQSGEKILTEQRDYRFRINRKDIVKMKYFLSESGMEELQDRFMNSSSTMYRWRKELAVKFGVREPRYLLLPDSVTLL.

Its pathway is glycan metabolism; Vi-antigen biosynthesis. It participates in capsule biogenesis; capsule polysaccharide biosynthesis. The polypeptide is Vi polysaccharide biosynthesis protein TviA (tviA) (Salmonella typhi).